Consider the following 64-residue polypeptide: Antimicrobial peptide THP2 (64 aa).

The N-terminal stretch at 1 to 28 (MRILYLLFSLLFLALQVSPGLSSPKRDM) is a signal peptide. 3 cysteine pairs are disulfide-bonded: Cys-31–Cys-57, Cys-36–Cys-51, and Cys-41–Cys-58.

As to expression, expressed in circulating heterophil granulocytes and bone marrow (at protein level).

The protein resides in the secreted. Functionally, antibacterial activity against the Gram-positive bacterium Staphylococcus aureus. Lacks antibacterial activity against the Gram-negative bacterium E.coli K-12. This Meleagris gallopavo (Wild turkey) protein is Antimicrobial peptide THP2.